The following is a 142-amino-acid chain: Endoribonuclease YbeY (142 aa).

Zn(2+) is bound by residues His-107, His-111, and Asp-117.

It belongs to the endoribonuclease YbeY family. It depends on Zn(2+) as a cofactor.

It is found in the cytoplasm. Functionally, single strand-specific metallo-endoribonuclease involved in late-stage 70S ribosome quality control and in maturation of the 3' terminus of the 16S rRNA. In Parabacteroides distasonis (strain ATCC 8503 / DSM 20701 / CIP 104284 / JCM 5825 / NCTC 11152), this protein is Endoribonuclease YbeY.